The sequence spans 411 residues: MATHYSIIGGMIIVVLLMIIGSEGGRLLEKKNRTSAEAEHYNVRRYLAENGLGQTPPMGWNSWNHFGCDINENVVRETADAMVSTGLAALGYQYINLDDCWAELNRDSEGNMVPNAAAFPSGIKALADYVHSKGLKLGVYSDAGNQTCSKRMPGSLGHEEQDAKTFASWGVDYLKYDNCENLGISVKERYPPMGKALLSSGRPIFFSMCEWGWEDPQIWAKSIGNSWRTTGDIEDNWNSMTSIADSNDKWASYAGPGGWNDPDMLEVGNGGMTTEEYRSHFSIWALAKAPLLVGCDIRAMDDTTHELISNAEVIAVNQDKLGVQGKKVKSTNDLEVWAGPLSDNKVAVILWNRSSSRATVTASWSDIGLQQGTTVDARDLWEHSTQSLVSGEISAEIDSHACKMYVLTPRS.

A signal peptide spans 1–24; that stretch reads MATHYSIIGGMIIVVLLMIIGSEG. Positions 25–47 are excised as a propeptide; sequence GRLLEKKNRTSAEAEHYNVRRYL. Asn-32 is a glycosylation site (N-linked (GlcNAc...) asparagine). Cys-68 and Cys-100 are oxidised to a cystine. The N-linked (GlcNAc...) asparagine glycan is linked to Asn-145. Cys-148 and Cys-179 form a disulfide bridge. The active-site Nucleophile is the Asp-177. Position 210-214 (210-214) interacts with substrate; it reads EWGWE. The active-site Proton donor is the Asp-232. Asn-352 carries N-linked (GlcNAc...) asparagine glycosylation.

This sequence belongs to the glycosyl hydrolase 27 family.

It carries out the reaction Hydrolysis of terminal, non-reducing alpha-D-galactose residues in alpha-D-galactosides, including galactose oligosaccharides, galactomannans and galactolipids.. Involved in the hydrolysis of the galactomannan, it splits alpha-linked galactose moieties. It is particularly suitable for the hydrolysis of guar gum to a gum with improved gelling properties. Preferentially cleaves alpha-1,6 glycoside linkages. The chain is Alpha-galactosidase from Cyamopsis tetragonoloba (Guar).